A 233-amino-acid chain; its full sequence is Glutathione S-transferase 2 (233 aa).

A GST N-terminal domain is found at 17 to 101; the sequence is QKMIIYDTPA…YIDALDGTPT (85 aa). Glutathione contacts are provided by residues tyrosine 29, histidine 58, valine 72, 85-86, and histidine 133; that span reads EC. Residues 106-233 enclose the GST C-terminal domain; that stretch reads TPLEKGVIHM…KLLEIRSKSS (128 aa).

Belongs to the GST superfamily. In terms of assembly, homodimer.

It catalyses the reaction RX + glutathione = an S-substituted glutathione + a halide anion + H(+). This Saccharomyces cerevisiae (strain ATCC 204508 / S288c) (Baker's yeast) protein is Glutathione S-transferase 2 (GTT2).